We begin with the raw amino-acid sequence, 455 residues long: Ribulose bisphosphate carboxylase large chain (455 aa).

N6,N6,N6-trimethyllysine is present on lysine 5. The substrate site is built by asparagine 114 and threonine 164. Lysine 166 functions as the Proton acceptor in the catalytic mechanism. Lysine 168 provides a ligand contact to substrate. Residues lysine 192, aspartate 194, and glutamate 195 each coordinate Mg(2+). Lysine 192 is modified (N6-carboxylysine). The Proton acceptor role is filled by histidine 285. Residues arginine 286, histidine 318, and serine 370 each contribute to the substrate site.

Belongs to the RuBisCO large chain family. Type I subfamily. Heterohexadecamer of 8 large chains and 8 small chains; disulfide-linked. The disulfide link is formed within the large subunit homodimers. Requires Mg(2+) as cofactor. Post-translationally, the disulfide bond which can form in the large chain dimeric partners within the hexadecamer appears to be associated with oxidative stress and protein turnover.

Its subcellular location is the plastid. It is found in the chloroplast. The catalysed reaction is 2 (2R)-3-phosphoglycerate + 2 H(+) = D-ribulose 1,5-bisphosphate + CO2 + H2O. It carries out the reaction D-ribulose 1,5-bisphosphate + O2 = 2-phosphoglycolate + (2R)-3-phosphoglycerate + 2 H(+). Its function is as follows. RuBisCO catalyzes two reactions: the carboxylation of D-ribulose 1,5-bisphosphate, the primary event in carbon dioxide fixation, as well as the oxidative fragmentation of the pentose substrate in the photorespiration process. Both reactions occur simultaneously and in competition at the same active site. This Brownea coccinea (Rose of Venezuela) protein is Ribulose bisphosphate carboxylase large chain.